Here is a 134-residue protein sequence, read N- to C-terminus: MSEIYRFGVSLDKSLIEAFDRHIQSRHYHNRSEALRDLIREELVRKKWTEGGTVAGAVIMTYDHHKRELVNRLLDIQHDFQKTIIASSHVHLDHDHCLEVIAVKGNAADVEQLSLKLKSLVGVKHLSLSISSAE.

4 residues coordinate Ni(2+): His-78, His-89, His-91, and Cys-97.

This sequence belongs to the transcriptional regulatory CopG/NikR family. It depends on Ni(2+) as a cofactor.

Its function is as follows. Transcriptional regulator. The polypeptide is Putative nickel-responsive regulator (Chlorobium phaeobacteroides (strain DSM 266 / SMG 266 / 2430)).